A 139-amino-acid chain; its full sequence is uncharacterized protein (139 aa).

The next 2 membrane-spanning stretches (helical) occupy residues Leu35 to Ile55 and Phe57 to Ile77.

The protein localises to the membrane. This is an uncharacterized protein from Saccharomyces cerevisiae (strain ATCC 204508 / S288c) (Baker's yeast).